Here is a 217-residue protein sequence, read N- to C-terminus: Ribosomal RNA small subunit methyltransferase G (217 aa).

Residues Gly78, Phe83, 129–130, and Arg146 each bind S-adenosyl-L-methionine; that span reads GE.

This sequence belongs to the methyltransferase superfamily. RNA methyltransferase RsmG family.

The protein resides in the cytoplasm. It catalyses the reaction guanosine(527) in 16S rRNA + S-adenosyl-L-methionine = N(7)-methylguanosine(527) in 16S rRNA + S-adenosyl-L-homocysteine. Its function is as follows. Specifically methylates the N7 position of guanine in position 527 of 16S rRNA. In Geobacter sulfurreducens (strain ATCC 51573 / DSM 12127 / PCA), this protein is Ribosomal RNA small subunit methyltransferase G.